The primary structure comprises 511 residues: Arabinose import ATP-binding protein AraG (511 aa).

ABC transporter domains are found at residues 5 to 240 (LEFR…MVGR) and 240 to 501 (RQID…LRPR). 37-44 (GENGAGKS) is an ATP binding site.

This sequence belongs to the ABC transporter superfamily. Arabinose importer (TC 3.A.1.2.2) family. As to quaternary structure, the complex is composed of two ATP-binding proteins (AraG), two transmembrane proteins (AraH) and a solute-binding protein (AraF).

The protein resides in the cell inner membrane. It carries out the reaction L-arabinose(out) + ATP + H2O = L-arabinose(in) + ADP + phosphate + H(+). Part of the ABC transporter complex AraFGH involved in arabinose import. Responsible for energy coupling to the transport system. The polypeptide is Arabinose import ATP-binding protein AraG (Ralstonia nicotianae (strain ATCC BAA-1114 / GMI1000) (Ralstonia solanacearum)).